The following is a 176-amino-acid chain: ATP synthase subunit b (176 aa).

Residues 14–34 (STTLGTMIVVSGAFLILMLLL) traverse the membrane as a helical segment.

The protein belongs to the ATPase B chain family. In terms of assembly, F-type ATPases have 2 components, F(1) - the catalytic core - and F(0) - the membrane proton channel. F(1) has five subunits: alpha(3), beta(3), gamma(1), delta(1), epsilon(1). F(0) has three main subunits: a(1), b(2) and c(10-14). The alpha and beta chains form an alternating ring which encloses part of the gamma chain. F(1) is attached to F(0) by a central stalk formed by the gamma and epsilon chains, while a peripheral stalk is formed by the delta and b chains.

Its subcellular location is the cell membrane. In terms of biological role, f(1)F(0) ATP synthase produces ATP from ADP in the presence of a proton or sodium gradient. F-type ATPases consist of two structural domains, F(1) containing the extramembraneous catalytic core and F(0) containing the membrane proton channel, linked together by a central stalk and a peripheral stalk. During catalysis, ATP synthesis in the catalytic domain of F(1) is coupled via a rotary mechanism of the central stalk subunits to proton translocation. Its function is as follows. Component of the F(0) channel, it forms part of the peripheral stalk, linking F(1) to F(0). The protein is ATP synthase subunit b of Enterococcus faecalis (strain ATCC 700802 / V583).